The sequence spans 1964 residues: Probable helicase with zinc finger domain (1964 aa).

The C3H1-type zinc finger occupies 178–206; sequence SEEYTLCKRFLEQGICRYGAQCTSAHSQE. Serine 248 carries the phosphoserine modification. An ATP-binding site is contributed by 668–675; that stretch reads GPYGTGKT. Positions 794-797 match the DEAA box motif; that stretch reads DEAA. Residues 1116 to 1127 show a composition bias toward polar residues; it reads HSGNSSRQQQSP. The interval 1116 to 1135 is disordered; that stretch reads HSGNSSRQQQSPPKVKSLYH. Position 1163 is a phosphothreonine (threonine 1163). Arginine 1245 carries the omega-N-methylarginine modification. Disordered regions lie at residues 1248-1350, 1360-1379, 1388-1449, 1463-1491, 1631-1655, and 1743-1964; these read PIPY…LPAP, HFHP…QPHT, LPEQ…QAGP, QSPA…RAIT, QVQP…QFAN, and QHAA…SYFK. Basic and acidic residues-rich tracts occupy residues 1268-1281 and 1292-1308; these read HAEK…RNGK and NKIR…KQVD. Pro residues predominate over residues 1365 to 1374; the sequence is PQLPRPPFPA. Residues 1388–1431 show a composition bias toward low complexity; that stretch reads LPEQPNQMAPQPNQVAPQPNQMTPQPNQVAPQPNQVVQQQSQAP. Pro residues predominate over residues 1635 to 1644; the sequence is RSPPAVPSPP. A phosphoserine mark is found at serine 1636, serine 1760, serine 1763, and serine 1788. A compositionally biased stretch (polar residues) spans 1755-1765; sequence SSRTVSASSLP. Polar residues-rich tracts occupy residues 1799 to 1813 and 1826 to 1849; these read PQDS…QGHS and WANT…TSQP. Basic and acidic residues predominate over residues 1860-1870; the sequence is KPPEDQLKPES. 2 stretches are compositionally biased toward polar residues: residues 1872–1881 and 1897–1910; these read EVSSSFNYSM and IAES…QSPA. Over residues 1941-1956 the composition is skewed to low complexity; sequence PLSLLQELSLGSSPGS.

It belongs to the DNA2/NAM7 helicase family. Interacts with POLR2A. Interacts with SMYD3; the interaction may bridge SMYD3 and RNA polymerase II. Interacts with SMYD2.

The protein localises to the nucleus. Its function is as follows. May act as a helicase that plays a role in RNA metabolism in multiple tissues and organs within the developing embryo. The chain is Probable helicase with zinc finger domain (Helz) from Mus musculus (Mouse).